A 232-amino-acid chain; its full sequence is Biosynthetic peptidoglycan transglycosylase (232 aa).

The chain crosses the membrane as a helical span at residues 14 to 34 (AAVALVLLYQLWIFAHVLWWI).

The protein belongs to the glycosyltransferase 51 family.

Its subcellular location is the cell inner membrane. The enzyme catalyses [GlcNAc-(1-&gt;4)-Mur2Ac(oyl-L-Ala-gamma-D-Glu-L-Lys-D-Ala-D-Ala)](n)-di-trans,octa-cis-undecaprenyl diphosphate + beta-D-GlcNAc-(1-&gt;4)-Mur2Ac(oyl-L-Ala-gamma-D-Glu-L-Lys-D-Ala-D-Ala)-di-trans,octa-cis-undecaprenyl diphosphate = [GlcNAc-(1-&gt;4)-Mur2Ac(oyl-L-Ala-gamma-D-Glu-L-Lys-D-Ala-D-Ala)](n+1)-di-trans,octa-cis-undecaprenyl diphosphate + di-trans,octa-cis-undecaprenyl diphosphate + H(+). Its pathway is cell wall biogenesis; peptidoglycan biosynthesis. Peptidoglycan polymerase that catalyzes glycan chain elongation from lipid-linked precursors. The chain is Biosynthetic peptidoglycan transglycosylase from Thiobacillus denitrificans (strain ATCC 25259 / T1).